A 583-amino-acid polypeptide reads, in one-letter code: Proline--tRNA ligase (583 aa).

It belongs to the class-II aminoacyl-tRNA synthetase family. ProS type 1 subfamily. In terms of assembly, homodimer.

It is found in the cytoplasm. It catalyses the reaction tRNA(Pro) + L-proline + ATP = L-prolyl-tRNA(Pro) + AMP + diphosphate. Its function is as follows. Catalyzes the attachment of proline to tRNA(Pro) in a two-step reaction: proline is first activated by ATP to form Pro-AMP and then transferred to the acceptor end of tRNA(Pro). As ProRS can inadvertently accommodate and process non-cognate amino acids such as alanine and cysteine, to avoid such errors it has two additional distinct editing activities against alanine. One activity is designated as 'pretransfer' editing and involves the tRNA(Pro)-independent hydrolysis of activated Ala-AMP. The other activity is designated 'posttransfer' editing and involves deacylation of mischarged Ala-tRNA(Pro). The misacylated Cys-tRNA(Pro) is not edited by ProRS. The sequence is that of Proline--tRNA ligase from Acidothermus cellulolyticus (strain ATCC 43068 / DSM 8971 / 11B).